The primary structure comprises 513 residues: Type-2 serine--tRNA ligase (513 aa).

A312 contributes to the L-serine binding site. C314 provides a ligand contact to Zn(2+). Residue R344 coordinates L-serine. ATP contacts are provided by residues 344 to 346 (RWE) and 355 to 356 (RV). An L-serine-binding site is contributed by 361-363 (RVE). Zn(2+)-binding residues include E363 and C467. R474 is a binding site for ATP.

Belongs to the class-II aminoacyl-tRNA synthetase family. Type-2 seryl-tRNA synthetase subfamily. Homodimer. Requires Zn(2+) as cofactor.

The protein localises to the cytoplasm. It catalyses the reaction tRNA(Ser) + L-serine + ATP = L-seryl-tRNA(Ser) + AMP + diphosphate + H(+). It carries out the reaction tRNA(Sec) + L-serine + ATP = L-seryl-tRNA(Sec) + AMP + diphosphate + H(+). It participates in aminoacyl-tRNA biosynthesis; selenocysteinyl-tRNA(Sec) biosynthesis; L-seryl-tRNA(Sec) from L-serine and tRNA(Sec): step 1/1. In terms of biological role, catalyzes the attachment of serine to tRNA(Ser). Is also able to aminoacylate tRNA(Sec) with serine, to form the misacylated tRNA L-seryl-tRNA(Sec), which will be further converted into selenocysteinyl-tRNA(Sec). This is Type-2 serine--tRNA ligase (serS) from Methanothermobacter thermautotrophicus (strain ATCC 29096 / DSM 1053 / JCM 10044 / NBRC 100330 / Delta H) (Methanobacterium thermoautotrophicum).